The following is a 335-amino-acid chain: Legumin type B (335 aa).

Disordered regions lie at residues 47 to 87 and 102 to 155; these read PETQ…GNSV and TEED…GRNG. Over residues 105–118 the composition is skewed to basic and acidic residues; that stretch reads DTAKRLRSPRDKRN. The segment covering 135-144 has biased composition (acidic residues); that stretch reads QQEEEEEEEE. One can recognise a Cupin type-1 domain in the interval 167-314; it reads ENIAQPARAD…AFGLRQRQVT (148 aa).

It belongs to the 11S seed storage protein (globulins) family. Hexamer; each subunit is composed of an acidic and a basic chain derived from a single precursor and linked by a disulfide bond.

This protein found in the seeds of many leguminous and non-leguminous plants is the source of sulfur-containing amino acids in seed meals. This is Legumin type B (LEB2) from Vicia faba (Broad bean).